The chain runs to 427 residues: Putative zinc protease AlbF (427 aa).

Histidine 66 is a binding site for Zn(2+). Catalysis depends on glutamate 69, which acts as the Proton acceptor. 2 residues coordinate Zn(2+): histidine 70 and glutamate 142.

The protein belongs to the peptidase M16 family. Zn(2+) is required as a cofactor.

Its function is as follows. Required for production of the bacteriocin subtilosin. Could catalyze some step in the processing of presubtilosin. The protein is Putative zinc protease AlbF (albF) of Bacillus subtilis.